Reading from the N-terminus, the 440-residue chain is MDDLYLHFVQQLARYPFRKILLALSGGVDSQVLLALLARGRDEFGWDVTAVHVHHGLSPNADQWAQHCQRCCREVGMACQIEYVQLDVASGESIEKLAREARYRVLAPHVNAQTLLLLGQHADDQLETFLLALKRGSGPKGLAAMAAYAPFAEGHLLRPLLTVSRQHIEAYAKQHKLTWVIDESNADIRYERNFLRHQVTPVLTERWPSIRQAVQRSAELCAEQEALLQEFLAEALKKAITAEGGLSIAVLAEGSEGMRRQLIRAWFAHHRLPMPSRQHTERIWCEVALASEDANPKLKLNHIEVRRFQHCLYLVPPEKDLSGWRSALVPEQRLPLPQGLGHLQLTSKAGGNIKLPDDPSQLWVSFEPQGLEACPVGRVGSRKLKKLFQEYGVPSWRRRQTPILMYQNRVVCVADLFVDRDWSGQDCELVWFKSHDSVPK.

Residue 25–30 coordinates ATP; the sequence is SGGVDS.

The protein belongs to the tRNA(Ile)-lysidine synthase family.

Its subcellular location is the cytoplasm. It carries out the reaction cytidine(34) in tRNA(Ile2) + L-lysine + ATP = lysidine(34) in tRNA(Ile2) + AMP + diphosphate + H(+). Its function is as follows. Ligates lysine onto the cytidine present at position 34 of the AUA codon-specific tRNA(Ile) that contains the anticodon CAU, in an ATP-dependent manner. Cytidine is converted to lysidine, thus changing the amino acid specificity of the tRNA from methionine to isoleucine. The polypeptide is tRNA(Ile)-lysidine synthase (Vibrio cholerae serotype O1 (strain ATCC 39541 / Classical Ogawa 395 / O395)).